A 356-amino-acid chain; its full sequence is Histidinol-phosphate aminotransferase 2 (356 aa).

An N6-(pyridoxal phosphate)lysine modification is found at Lys-214.

It belongs to the class-II pyridoxal-phosphate-dependent aminotransferase family. Histidinol-phosphate aminotransferase subfamily. In terms of assembly, homodimer. Pyridoxal 5'-phosphate serves as cofactor.

The enzyme catalyses L-histidinol phosphate + 2-oxoglutarate = 3-(imidazol-4-yl)-2-oxopropyl phosphate + L-glutamate. It functions in the pathway amino-acid biosynthesis; L-histidine biosynthesis; L-histidine from 5-phospho-alpha-D-ribose 1-diphosphate: step 7/9. This is Histidinol-phosphate aminotransferase 2 from Dechloromonas aromatica (strain RCB).